Reading from the N-terminus, the 121-residue chain is uncharacterized protein (121 aa).

2 disordered regions span residues 1–28 (MGCA…QNGD) and 60–81 (QENL…EIPG). 2 positions are modified to phosphoserine: serine 95 and serine 115.

This is an uncharacterized protein from Mus musculus (Mouse).